A 394-amino-acid chain; its full sequence is Phenylalanine 4-monooxygenase, chloroplastic (394 aa).

The N-terminal 79 residues, 1–79 (MAMEVGYLRH…LNQIQAVSTA (79 aa)), are a transit peptide targeting the chloroplast. Residues 75-97 (AVSTAEKEREADKTSTPPIPSSI) are disordered. Fe cation contacts are provided by His-252, His-257, and Glu-297.

It belongs to the biopterin-dependent aromatic amino acid hydroxylase family. Forms monomers. The cofactor is Fe(2+).

Its subcellular location is the plastid. It is found in the chloroplast. The enzyme catalyses (6R)-L-erythro-5,6,7,8-tetrahydrobiopterin + L-phenylalanine + O2 = (4aS,6R)-4a-hydroxy-L-erythro-5,6,7,8-tetrahydrobiopterin + L-tyrosine. In terms of biological role, catalyzes the hydroxylation of L-phenylalanine to L-tyrosine. Does not seem to be tetrahydropterin-dependent and shows preference for 10-formyltetrahydrofolate as cosubstrate and electron donor. The chain is Phenylalanine 4-monooxygenase, chloroplastic from Physcomitrium patens (Spreading-leaved earth moss).